The chain runs to 462 residues: ATP-dependent protease ATPase subunit HslU (462 aa).

Residues I21, 63 to 68, D275, E340, and R412 each bind ATP; that span reads GVGKTE.

It belongs to the ClpX chaperone family. HslU subfamily. A double ring-shaped homohexamer of HslV is capped on each side by a ring-shaped HslU homohexamer. The assembly of the HslU/HslV complex is dependent on binding of ATP.

The protein resides in the cytoplasm. Functionally, ATPase subunit of a proteasome-like degradation complex; this subunit has chaperone activity. The binding of ATP and its subsequent hydrolysis by HslU are essential for unfolding of protein substrates subsequently hydrolyzed by HslV. HslU recognizes the N-terminal part of its protein substrates and unfolds these before they are guided to HslV for hydrolysis. This is ATP-dependent protease ATPase subunit HslU from Pseudothermotoga lettingae (strain ATCC BAA-301 / DSM 14385 / NBRC 107922 / TMO) (Thermotoga lettingae).